We begin with the raw amino-acid sequence, 974 residues long: Localization factor PodJL (974 aa).

Coiled-coil stretches lie at residues 81-163 (DEVG…EAAG), 218-320 (VARL…SAQA), and 375-469 (QAQA…LEAA). Disordered stretches follow at residues 460–497 (SEAQ…SPFE) and 589–611 (AAAR…KKEK). The span at 589-598 (AAARAAAASE) shows a compositional bias: low complexity. Residues 642–662 (ALVVFAAAGALGAGVGGLLLL) traverse the membrane as a helical segment. 3 Sel1-like repeats span residues 757 to 793 (PAAQ…NGGD), 794 to 829 (PRAM…DMGL), and 830 to 865 (VDSQ…RAGD).

Two isoforms exist, the full-length translation product PodJL and a C-terminal truncated form PodJS. Both appear during a specific time period of the cell cycle to control different aspects of polar organelle development.

The protein resides in the membrane. PodJL provides the positional information for the localization of several polar organelles (pili, adhesive holdfast and chemotactic apparatus) by recruiting structural (CpaE) and regulatory (PleC) proteins to a specific cell pole. The chain is Localization factor PodJL (podJ) from Caulobacter vibrioides (strain ATCC 19089 / CIP 103742 / CB 15) (Caulobacter crescentus).